A 330-amino-acid polypeptide reads, in one-letter code: T-cell surface glycoprotein CD1b4 (330 aa).

Residues 1 to 15 form the signal peptide; it reads MLLLALAFFFPAGDT. The Extracellular segment spans residues 16-299; it reads QNVLPGKISF…LYWGHSISIG (284 aa). N-linked (GlcNAc...) asparagine glycosylation is found at asparagine 35, asparagine 72, and asparagine 143. 2 cysteine pairs are disulfide-bonded: cysteine 117–cysteine 181 and cysteine 221–cysteine 276. Positions 182–292 constitute an Ig-like domain; that stretch reads PRYLMSVIEA…LEGQDIILYW (111 aa). The chain crosses the membrane as a helical span at residues 300–320; sequence WIILAVLVPCLIVLVLFILWF. Over 321 to 330 the chain is Cytoplasmic; that stretch reads YRRWSYEDIF. An Internalization signal motif is present at residues 326–329; the sequence is YEDI.

Heterodimer with B2M (beta-2-microglobulin). Interacts with saposin C.

Its subcellular location is the cell membrane. The protein localises to the endosome membrane. It is found in the lysosome membrane. Antigen-presenting protein that binds self and non-self lipid and glycolipid antigens and presents them to T-cell receptors on natural killer T-cells. The chain is T-cell surface glycoprotein CD1b4 (CD1B4) from Cavia porcellus (Guinea pig).